The chain runs to 1177 residues: Zinc finger CCCH domain-containing protein 6 (1177 aa).

Positions 1 to 12 (MTDSEHAGHDRE) are enriched in basic and acidic residues. 2 disordered regions span residues 1–137 (MTDS…SKEY) and 179–206 (QESS…TEYR). The segment covering 13 to 31 (DGELEDGEIDDAGFEETQD) has biased composition (acidic residues). A coiled-coil region spans residues 27-73 (EETQDQEAKENEKQKNEKAYRKSRKKHKKEREKKKSKRRKHEKHKHN). Over residues 32–46 (QEAKENEKQKNEKAY) the composition is skewed to basic and acidic residues. Residues 47-73 (RKSRKKHKKEREKKKSKRRKHEKHKHN) show a composition bias toward basic residues. The segment covering 179–188 (QESSGSSFSK) has biased composition (low complexity). 3 C3H1-type zinc fingers span residues 271–297 (KGKQ…HDAE), 299–326 (EKKK…HSEF), and 327–350 (PCKF…HDDL). A coiled-coil region spans residues 347 to 383 (HDDLTKETRKLLDKVLNADEELVNEDERELEELRKRG). 8 disordered regions span residues 383–416 (GITP…FETD), 446–587 (PPAF…ESMQ), 622–654 (QQQP…SASG), 670–767 (RYQE…KKPH), 780–826 (PKKL…SERE), 942–988 (EQSG…SSRS), 1043–1101 (DPRD…PVDG), and 1132–1162 (LLRP…DKPL). Positions 493–502 (HPGSPGHHPC) are enriched in low complexity. Polar residues-rich tracts occupy residues 512 to 522 (ENPSLLPSSSE) and 564 to 587 (SSPA…ESMQ). Over residues 713 to 728 (RTLQKQTGTLRNQQLP) the composition is skewed to polar residues. Over residues 753–767 (PRLRTVPRQDIKKPH) the composition is skewed to basic and acidic residues. Over residues 955–967 (GDPRLQKNFDPRL) the composition is skewed to basic and acidic residues. 2 stretches are compositionally biased toward polar residues: residues 1050 to 1064 (LSAT…GENT) and 1077 to 1093 (KNQP…NTTA). Position 1150 is a phosphoserine (Ser1150).

The polypeptide is Zinc finger CCCH domain-containing protein 6 (Zc3h6) (Mus musculus (Mouse)).